A 194-amino-acid chain; its full sequence is Protein GrpE (194 aa).

Over residues 1 to 14 the composition is skewed to basic and acidic residues; sequence MSKMNPNEKKENAS. The disordered stretch occupies residues 1–48; that stretch reads MSKMNPNEKKENASKNENVNNEEATNLQEEQSNAADEAAGSDNVSGEV. The segment covering 24–34 has biased composition (polar residues); it reads ATNLQEEQSNA.

Belongs to the GrpE family. In terms of assembly, homodimer.

The protein localises to the cytoplasm. Functionally, participates actively in the response to hyperosmotic and heat shock by preventing the aggregation of stress-denatured proteins, in association with DnaK and GrpE. It is the nucleotide exchange factor for DnaK and may function as a thermosensor. Unfolded proteins bind initially to DnaJ; upon interaction with the DnaJ-bound protein, DnaK hydrolyzes its bound ATP, resulting in the formation of a stable complex. GrpE releases ADP from DnaK; ATP binding to DnaK triggers the release of the substrate protein, thus completing the reaction cycle. Several rounds of ATP-dependent interactions between DnaJ, DnaK and GrpE are required for fully efficient folding. In Parabacteroides distasonis (strain ATCC 8503 / DSM 20701 / CIP 104284 / JCM 5825 / NCTC 11152), this protein is Protein GrpE.